The sequence spans 364 residues: Putative serine/threonine-protein phosphatase C06A1.3 (364 aa).

The interval 1 to 24 is disordered; sequence MSTDGNNNKKGSKEGPKSSEISKF. The span at 11 to 24 shows a compositional bias: basic and acidic residues; the sequence is GSKEGPKSSEISKF. Asp93, His95, Asp121, and Asn153 together coordinate Mn(2+). His154 functions as the Proton donor in the catalytic mechanism. Mn(2+) contacts are provided by His202 and His277.

It belongs to the PPP phosphatase family. PP-1 subfamily. It depends on Mn(2+) as a cofactor.

The enzyme catalyses O-phospho-L-seryl-[protein] + H2O = L-seryl-[protein] + phosphate. It catalyses the reaction O-phospho-L-threonyl-[protein] + H2O = L-threonyl-[protein] + phosphate. This Caenorhabditis elegans protein is Putative serine/threonine-protein phosphatase C06A1.3.